We begin with the raw amino-acid sequence, 158 residues long: Protein NrdI (158 aa).

Belongs to the NrdI family.

Functionally, probably involved in ribonucleotide reductase function. This Rhodococcus jostii (strain RHA1) protein is Protein NrdI.